The primary structure comprises 105 residues: Large ribosomal subunit protein uL24 (105 aa).

Belongs to the universal ribosomal protein uL24 family. Part of the 50S ribosomal subunit.

Its function is as follows. One of two assembly initiator proteins, it binds directly to the 5'-end of the 23S rRNA, where it nucleates assembly of the 50S subunit. In terms of biological role, one of the proteins that surrounds the polypeptide exit tunnel on the outside of the subunit. This chain is Large ribosomal subunit protein uL24, found in Mycobacterium avium (strain 104).